We begin with the raw amino-acid sequence, 144 residues long: Elicitor-responsive protein 3 (144 aa).

Positions methionine 1 to valine 103 constitute a C2 domain. Ca(2+)-binding residues include aspartate 20, aspartate 26, aspartate 73, aspartate 75, and aspartate 81. Residues threonine 123–serine 144 are disordered.

The cofactor is Ca(2+).

The sequence is that of Elicitor-responsive protein 3 (ERG3) from Oryza sativa subsp. indica (Rice).